The chain runs to 541 residues: Glucose-6-phosphate isomerase (541 aa).

The active-site Proton donor is the glutamate 346. Residues histidine 377 and lysine 506 contribute to the active site.

This sequence belongs to the GPI family.

It is found in the cytoplasm. It catalyses the reaction alpha-D-glucose 6-phosphate = beta-D-fructose 6-phosphate. It participates in carbohydrate biosynthesis; gluconeogenesis. The protein operates within carbohydrate degradation; glycolysis; D-glyceraldehyde 3-phosphate and glycerone phosphate from D-glucose: step 2/4. Its function is as follows. Catalyzes the reversible isomerization of glucose-6-phosphate to fructose-6-phosphate. This Rhizobium etli (strain ATCC 51251 / DSM 11541 / JCM 21823 / NBRC 15573 / CFN 42) protein is Glucose-6-phosphate isomerase.